A 616-amino-acid chain; its full sequence is Chaperone protein HscA homolog (616 aa).

It belongs to the heat shock protein 70 family.

In terms of biological role, chaperone involved in the maturation of iron-sulfur cluster-containing proteins. Has a low intrinsic ATPase activity which is markedly stimulated by HscB. The polypeptide is Chaperone protein HscA homolog (Histophilus somni (strain 2336) (Haemophilus somnus)).